The following is a 245-amino-acid chain: Type II restriction enzyme EcoRV (245 aa).

Mg(2+) is bound by residues Glu45, Asp74, and Asp90. Active-site residues include Asp74, Asp90, and Lys92.

In terms of assembly, homodimer. Mg(2+) is required as a cofactor.

It carries out the reaction Endonucleolytic cleavage of DNA to give specific double-stranded fragments with terminal 5'-phosphates.. A P subtype restriction enzyme that recognizes the double-stranded sequence 5'-GATATC-3' and cleaves after T-3. This is Type II restriction enzyme EcoRV (ecoRVR) from Escherichia coli.